The sequence spans 1710 residues: Centrosomal protein of 152 kDa (1710 aa).

Disordered stretches follow at residues 1–27 (MSLDFGSVALPVQNEDEEYDEEDYERE), 39–79 (HDML…NEQM), and 108–139 (NRSKTEDRHPVYHPEEGGDEGGSGYSPPSKCE). Positions 1 to 60 (MSLDFGSVALPVQNEDEEYDEEDYEREKELQQLLTDLPHDMLDDDLSSPELQYSDCSEDG) are interaction with PLK4. The span at 14–24 (NEDEEYDEEDY) shows a compositional bias: acidic residues. The span at 108–123 (NRSKTEDRHPVYHPEE) shows a compositional bias: basic and acidic residues. Positions 234 to 490 (ENMQIIQLQV…ISLYESAAKL (257 aa)) form a coiled coil. Positions 587–604 (DEKSIEVETKTDTSEKPK) are enriched in basic and acidic residues. Residues 587 to 611 (DEKSIEVETKTDTSEKPKNQLWPES) are disordered. 3 coiled-coil regions span residues 615-664 (DVVR…QDFD), 700-772 (EKQQ…LEKE), and 902-993 (AVSE…INEV). Residues 1120–1142 (ELSKDSASQGTGQGDPGPAAGHH) are disordered. A coiled-coil region spans residues 1170-1241 (HCFQELEKAK…LEELQTLCKT (72 aa)). Thr-1241 bears the Phosphothreonine mark.

The protein belongs to the CEP152 family. As to quaternary structure, interacts (via N-terminus) with PLK4; the interaction is mutally exclusive with a PLK4:CEP192 interaction. Interacts (via C-terminus) with CPAP (via-N-terminus). Interacts with CINP. Interacts with CDK5RAP2, WDR62, CEP63 and CEP131. CEP63, CDK5RAP2, CEP152, WDR62 are proposed to form a stepwise assembled complex at the centrosome forming a ring near parental centrioles. Interacts with DEUP1; this interaction recruits CEP152 to the deuterosome. The interactions with CEP63 and DEUP1 are mutually exclusive. Interacts with CCDC66.

It is found in the cytoplasm. The protein resides in the cytoskeleton. It localises to the microtubule organizing center. Its subcellular location is the centrosome. The protein localises to the centriole. Functionally, necessary for centrosome duplication; the function also seems to involve CEP63, CDK5RAP2 and WDR62 through a stepwise assembled complex at the centrosome that recruits CDK2 required for centriole duplication. Acts as a molecular scaffold facilitating the interaction of PLK4 and CPAP, 2 molecules involved in centriole formation. Proposed to snatch PLK4 away from PLK4:CEP92 complexes in early G1 daughter centriole and to reposition PLK4 at the outer boundary of a newly forming CEP152 ring structure. Also plays a key role in deuterosome-mediated centriole amplification in multiciliated that can generate more than 100 centrioles. Overexpression of CEP152 can drive amplification of centrioles. The protein is Centrosomal protein of 152 kDa of Homo sapiens (Human).